Consider the following 2481-residue polypeptide: MEQSPPPAPEPTQGPTPARSRRRREPESPPASAPIPLFGADTIGQRSPDGPVLSKAEFVEKVRQSNQACHDGDFHTAIVLYNEALAVDPQNCILYSNRSAAYMKIQQYDKALDDAIKARLLNPKWPKAYFRQGVALQYLGRHADALAAFASGLAQDPKSLQLLVGMVEAAMKSPMRDSLEPTYQQLQKMKLDKSPFVVVSVVGQELLTAGHHGASVVVLEAALKIGTCSLKLRGSVFSALSSAYWSLGNTEKSTGYMQQDLDVAKTLGDQTGECRAHGNLGSAFFSKGNYREALTNHRHQLVLAMKLKDREAASSALSSLGHVYTAIGDYPNALASHKQCVLLAKQSKDELSEARELGNMGAVYIAMGDFENAVQCHEQHLKIAKDLGNKREEARAYSNLGSAYHYRRNFDKAMSYHNYVLELAQELMEKAIEMRAYAGLGHAARCMQDLERAKQYHEQQLGIAEDLKDRAAEGRASSNLGIIHQMKGDYDTALKLHKTHLCIAQELSDYAAQGRAYGNMGNAYNALGMYDQAVKYHRQELQISMEVNDRASQASTHGNLAVAYQALGAHDRALQHYQNHLNIARELRDIQSEARALSNLGNFHCSRGEYVQAAPYYEQYLRLAPDLQDMEGEGKVCHNLGYAHYCLGNYQEAVKYYEQDLALAKDLHDKLSQAKAYCNLGLAFKALLNFSKAEECQKYLLSLAQSLNNSQAKFRALGNLGDIFICKKDINGAIKFYEQQLGLAHQVKDRRLEASAYAALGTAYRMIQKYDKALGYHTQELEVYQELSDLPGECRAHGHLAAVYMALGKYTMAFKCYEEQLDLGQKLKDPSLEAQVYGNMGITKMNMNVMEEAIGYFEQQLAMLQQLSGNESVLDRGRAYGNLGDCYEALGDYEEAIKYYEQYLSVAQSLNRMQDQAKAYRGLGNGHRAMGSLQQALVCFEKRLVVAHELGEAFNKAQAYGELGSLHSQLGNYEQAISCLERQLNIARDMKDRALESDAACGLGGVYQQMGEYDTALQYHQLDLQIAEETNNPTCQGRAYGNLGLTYESLGTFERAVVYQEQHLSIAAQMNDLAAKTVSYSSLGRTHHALQNYSQAVMYLQEGLRLAEQLGRREDEAKIRHGLGLSLWASGNLEEAQHQLYRASALFETIRHEAQLSTDYKLSLFDLQTSSYQALQRVLVSLGHHDEALAVAERGRTRAFADLLVERQTGQQDSDPYSPVTIDQILEMVNGQRGLVLYYSLAAGYLYSWLLAPGAGIVKFHEHYLGENTVENSSDFQASSSVTLPTATGSALEQHIASVREALGVESHYSRACASSETESEAGDIMDQQFEEMNNKLNSVTDPTGFLRMVRRNNLFNRSCQSMTSLFSNTVSPTQDGTSSLPRRQSSFAKPPLRALYDLLIAPMEGGLMHSSGPVGRHRQLILVLEGELYLIPFALLKGSSSNEYLYERFGLLAVPSIRSLSVQSKSHLRKNPPTYSSSTSMAAVIGNPKLPSAVMDRWLWGPMPSAEEEAYMVSELLGCQPLVGSVATKERVMSALTQAECVHFATHISWKLSALVLTPSMDGNPASSKSSFGHPYTIPESLRVQDDASDGESISDCPPLQELLLTAADVLDLQLPVKLVVLGSSQESNSKVTADGVIALTRAFLAAGAQCVLVSLWPVPVAASKMFIHAFYSSLLNGLKASAALGEAMKVVQSSKAFSHPSNWAGFMLIGSDVKLNSPSSLIGQALTEILQHPERARDALRVLLHLVEKSLQRIQNGQRNAMYTSQQSVENKVGGIPGWQALLTAVGFRLDPPTSGLPAAVFFPTSDPGDRLQQCSSTLQSLLGLPNPALQALCKLITASETGEQLISRAVKNMVGMLHQVLVQLQAGEKEQDLASAPIQVSISVQLWRLPGCHEFLAALGFDLCEVGQEEVILKTGKQANRRTVHFALQSLLSLFDSTELPKRLSLDSSSSLESLASAQSVSNALPLGYQQPPFSPTGADSIASDAISVYSLSSIASSMSFVSKPEGGSEGGGPGGRQDHDRSKNAYLQRSTLPRSQLPPQTRPAGNKDEEEYEGFSIISNEPLATYQENRNTCFSPDHKQPQPGTAGGMRVSVSSKGSISTPNSPVKMTLIPSPNSPFQKVGKLASSDTGESDQSSTETDSTVKSQEESNPKLDPQELAQKILEETQSHLIAVERLQRSGGQVSKSNNPEDGVQAPSSTAVFRASETSAFSRPVLSHQKSQPSPVTVKPKPPARSSSLPKVSSGYSSPTTSEMSIKDSPSQHSGRPSPGCDSQTSQLDQPLFKLKYPSSPYSAHISKSPRNMSPSSGHQSPAGSAPSPALSYSSAGSARSSPADAPDIDKLKMAAIDEKVQAVHNLKMFWQSTPQHSTGPMKIFRGAPGTMTSKRDVLSLLNLSPRHNKKEEGVDKLELKELSLQQHDGAPPKAPPNGHWRTETTSLGSLPLPAGPPATAPARPLRLPSGNGYKFLSPGRFFPSSKC.

Residue Met-1 is modified to N-acetylmethionine. Residues 1 to 14 (MEQSPPPAPEPTQG) show a composition bias toward pro residues. Residues 1-48 (MEQSPPPAPEPTQGPTPARSRRRREPESPPASAPIPLFGADTIGQRSP) form a disordered region. Ser-28 bears the Phosphoserine mark. TPR repeat units follow at residues 58 to 91 (FVEKVRQSNQACHDGDFHTAIVLYNEALAVDPQN), 93 to 125 (ILYSNRSAAYMKIQQYDKALDDAIKARLLNPKW), 126 to 159 (PKAYFRQGVALQYLGRHADALAAFASGLAQDPKS), 196 to 229 (FVVVSVVGQELLTAGHHGASVVVLEAALKIGTCS), 234 to 267 (GSVFSALSSAYWSLGNTEKSTGYMQQDLDVAKTL), 274 to 307 (CRAHGNLGSAFFSKGNYREALTNHRHQLVLAMKL), 314 to 347 (SSALSSLGHVYTAIGDYPNALASHKQCVLLAKQS), 354 to 387 (ARELGNMGAVYIAMGDFENAVQCHEQHLKIAKDL), 394 to 427 (ARAYSNLGSAYHYRRNFDKAMSYHNYVLELAQEL), 434 to 467 (MRAYAGLGHAARCMQDLERAKQYHEQQLGIAEDL), 474 to 507 (GRASSNLGIIHQMKGDYDTALKLHKTHLCIAQEL), 514 to 547 (GRAYGNMGNAYNALGMYDQAVKYHRQELQISMEV), 554 to 587 (ASTHGNLAVAYQALGAHDRALQHYQNHLNIAREL), 594 to 627 (ARALSNLGNFHCSRGEYVQAAPYYEQYLRLAPDL), 634 to 667 (GKVCHNLGYAHYCLGNYQEAVKYYEQDLALAKDL), 674 to 707 (AKAYCNLGLAFKALLNFSKAEECQKYLLSLAQSL), 714 to 747 (FRALGNLGDIFICKKDINGAIKFYEQQLGLAHQV), 754 to 787 (ASAYAALGTAYRMIQKYDKALGYHTQELEVYQEL), 794 to 827 (CRAHGHLAAVYMALGKYTMAFKCYEEQLDLGQKL), 834 to 867 (AQVYGNMGITKMNMNVMEEAIGYFEQQLAMLQQL), 877 to 910 (GRAYGNLGDCYEALGDYEEAIKYYEQYLSVAQSL), 917 to 950 (AKAYRGLGNGHRAMGSLQQALVCFEKRLVVAHEL), 957 to 990 (AQAYGELGSLHSQLGNYEQAISCLERQLNIARDM), 997 to 1030 (SDAACGLGGVYQQMGEYDTALQYHQLDLQIAEET), 1037 to 1070 (GRAYGNLGLTYESLGTFERAVVYQEQHLSIAAQM), 1077 to 1110 (TVSYSSLGRTHHALQNYSQAVMYLQEGLRLAEQL), 1117 to 1150 (AKIRHGLGLSLWASGNLEEAQHQLYRASALFETI), and 1169 to 1202 (TSSYQALQRVLVSLGHHDEALAVAERGRTRAFAD). Residue Ser-1590 is modified to Phosphoserine. 3 disordered regions span residues 2004–2055 (FVSK…DEEE), 2075–2161 (NTCF…DPQE), and 2176–2339 (AVER…PADA). 2 stretches are compositionally biased toward polar residues: residues 2029 to 2043 (AYLQRSTLPRSQLPP) and 2096 to 2122 (SVSSKGSISTPNSPVKMTLIPSPNSPF). Ser-2104 carries the post-translational modification Phosphoserine. Residues 2130-2146 (SSDTGESDQSSTETDST) show a composition bias toward low complexity. Residues 2149-2159 (SQEESNPKLDP) are compositionally biased toward basic and acidic residues. The span at 2183–2214 (SGGQVSKSNNPEDGVQAPSSTAVFRASETSAF) shows a compositional bias: polar residues. A phosphoserine mark is found at Ser-2224 and Ser-2251. Over residues 2238–2282 (RSSSLPKVSSGYSSPTTSEMSIKDSPSQHSGRPSPGCDSQTSQLD) the composition is skewed to polar residues. Positions 2307-2339 (SPSSGHQSPAGSAPSPALSYSSAGSARSSPADA) are enriched in low complexity. A phosphoserine mark is found at Ser-2393 and Ser-2398. A disordered region spans residues 2420–2467 (QHDGAPPKAPPNGHWRTETTSLGSLPLPAGPPATAPARPLRLPSGNGY).

Interacts with AURKB. As to expression, widely expressed in fetal tissues. In adult tissues, expressed in testis and ovary and, at much lower levels, in kidney and pancreas.

Its subcellular location is the cytoplasm. The protein resides in the cytoskeleton. It is found in the microtubule organizing center. It localises to the centrosome. The protein localises to the spindle. Its subcellular location is the spindle pole. The protein resides in the midbody. In terms of biological role, during mitosis, may be involved in the condensation of spindle midzone microtubules, leading to the formation of midbody. The protein is Tetratricopeptide repeat protein 28 (TTC28) of Homo sapiens (Human).